A 92-amino-acid polypeptide reads, in one-letter code: Acyl-CoA-binding domain-containing protein 6 (92 aa).

In terms of domain architecture, ACB spans 3–88; the sequence is LKEEFEEHAE…VKQLLEVAAS (86 aa). An acyl-CoA-binding positions include 30–34, Lys52, Lys56, and Tyr75; that span reads YGLYK.

The protein belongs to the ACBP family. As to quaternary structure, interacts with PDLP8. As to expression, mostly expressed in seeds, stems, and siliques, and, to a lower extent, in leaves, flowers, and roots (at protein level). Highly expressed in root and shoot phloem companion cells.

The protein localises to the cytoplasm. The protein resides in the cell membrane. Its function is as follows. Binds medium- and long-chain acyl-CoA esters with very high affinity. May function as an intracellular carrier of acyl-CoA esters. Confers resistance to cold and freezing. Interacts with phosphatidylcholine and derivatives, but not phosphatidic acid and lysophosphatidylcholine. May be involved in phospholipid metabolism. This chain is Acyl-CoA-binding domain-containing protein 6 (ACBP6), found in Arabidopsis thaliana (Mouse-ear cress).